The sequence spans 283 residues: NADPH-dependent 7-cyano-7-deazaguanine reductase (283 aa).

89 to 91 (IES) serves as a coordination point for substrate. 91-92 (SK) provides a ligand contact to NADPH. Cys-190 (thioimide intermediate) is an active-site residue. Catalysis depends on Asp-197, which acts as the Proton donor. 229 to 230 (HE) is a binding site for substrate. An NADPH-binding site is contributed by 258–259 (RG).

The protein belongs to the GTP cyclohydrolase I family. QueF type 2 subfamily. As to quaternary structure, homodimer.

Its subcellular location is the cytoplasm. It catalyses the reaction 7-aminomethyl-7-carbaguanine + 2 NADP(+) = 7-cyano-7-deazaguanine + 2 NADPH + 3 H(+). The protein operates within tRNA modification; tRNA-queuosine biosynthesis. In terms of biological role, catalyzes the NADPH-dependent reduction of 7-cyano-7-deazaguanine (preQ0) to 7-aminomethyl-7-deazaguanine (preQ1). The chain is NADPH-dependent 7-cyano-7-deazaguanine reductase from Aromatoleum aromaticum (strain DSM 19018 / LMG 30748 / EbN1) (Azoarcus sp. (strain EbN1)).